Here is a 1948-residue protein sequence, read N- to C-terminus: Receptor-type tyrosine-protein phosphatase S (1948 aa).

An N-terminal signal peptide occupies residues 1 to 29; it reads MAPTWGPGMVSVVGPMGLLVVLLVGGCAA. The Extracellular segment spans residues 30–1282; the sequence is EEPPRFIKEP…PQPIVDGEEG (1253 aa). Ig-like C2-type domains follow at residues 33–123, 135–233, and 245–327; these read PRFI…AKLT, PNID…ANLY, and PRFS…AQIT. 2 cysteine pairs are disulfide-bonded: Cys-54-Cys-107 and Cys-156-Cys-216. An important for binding to glycosaminoglycan chains region spans residues 68-72; it reads KKGKK. 2 N-linked (GlcNAc...) asparagine glycosylation sites follow: Asn-263 and Asn-308. A disulfide bridge connects residues Cys-266 and Cys-311. Fibronectin type-III domains lie at 334–424, 429–523, 527–616, 621–718, 723–831, 832–930, 931–1033, and 1036–1120; these read APGT…TGEQ, APRN…TQQG, QPMN…TLQS, PPQD…TDED, PPRK…TKGA, VLGR…TPRG, HPQI…FLRD, and SPKN…TAFN. The disordered stretch occupies residues 700-724; sequence TEVGPGPESSPVVVRTDEDVPSAPP. Over residues 701–713 the composition is skewed to low complexity; it reads EVGPGPESSPVVV. Asn-733 is a glycosylation site (N-linked (GlcNAc...) asparagine). N-linked (GlcNAc...) asparagine glycosylation occurs at Asn-940. The helical transmembrane segment at 1283 to 1303 threads the bilayer; the sequence is LIWVIGPVLAVVFIICIVIAI. The Cytoplasmic portion of the chain corresponds to 1304-1948; that stretch reads LLYKNKPDSK…YLGSFDHYAT (645 aa). 2 stretches are compositionally biased toward basic and acidic residues: residues 1311–1321 and 1331–1340; these read DSKRKDSEPRT and APHHPKDPVE. Residues 1311-1340 are disordered; it reads DSKRKDSEPRTKCLLNNADLAPHHPKDPVE. 2 Tyrosine-protein phosphatase domains span residues 1393 to 1648 and 1680 to 1939; these read LSQE…LLEA and MELE…ALEY. Substrate contacts are provided by residues Asp-1557, 1589 to 1595, and Gln-1633; that span reads CSAGVGR. Cys-1589 (phosphocysteine intermediate) is an active-site residue. Cys-1880 functions as the Phosphocysteine intermediate in the catalytic mechanism.

The protein belongs to the protein-tyrosine phosphatase family. Receptor class 2A subfamily. As to quaternary structure, binding to large heparan sulfate proteoglycan structures promotes oligomerization. Binding to chondroitin sulfate proteoglycan does not lead to oligomerization. Interacts (via Ig-like domains) with NTRK3. Interacts (via Ig-like domains) with NTRK1, but does not form detectable complexes with NTRK2. Interacts with PPFIA1, PPFIA2 and PPFIA3. Post-translationally, a cleavage occurs, separating the extracellular domain from the transmembrane segment. This process called 'ectodomain shedding' is thought to be involved in receptor desensitization, signal transduction and/or membrane localization. Detected in peripheral blood plasmacytoid dendritic cells (at protein level). Detected in all tissues tested except for placenta and liver. Detected in peripheral blood plasmacytoid dendritic cells.

The protein resides in the cell membrane. The protein localises to the cell projection. It localises to the axon. It is found in the perikaryon. Its subcellular location is the cytoplasmic vesicle. The protein resides in the secretory vesicle. The protein localises to the synaptic vesicle membrane. It localises to the synapse. It is found in the synaptosome. Its subcellular location is the postsynaptic density. The protein resides in the neuron projection. The protein localises to the growth cone. The catalysed reaction is O-phospho-L-tyrosyl-[protein] + H2O = L-tyrosyl-[protein] + phosphate. In terms of biological role, cell surface receptor that binds to glycosaminoglycans, including chondroitin sulfate proteoglycans and heparan sulfate proteoglycan. Binding to chondroitin sulfate and heparan sulfate proteoglycans has opposite effects on PTPRS oligomerization and regulation of neurite outgrowth. Contributes to the inhibition of neurite and axonal outgrowth by chondroitin sulfate proteoglycans, also after nerve transection. Plays a role in stimulating neurite outgrowth in response to the heparan sulfate proteoglycan GPC2. Required for normal brain development, especially for normal development of the pituitary gland and the olfactory bulb. Functions as a tyrosine phosphatase. Mediates dephosphorylation of NTRK1, NTRK2 and NTRK3. Plays a role in down-regulation of signaling cascades that lead to the activation of Akt and MAP kinases. Down-regulates TLR9-mediated activation of NF-kappa-B, as well as production of TNF, interferon alpha and interferon beta. The protein is Receptor-type tyrosine-protein phosphatase S (PTPRS) of Homo sapiens (Human).